Consider the following 218-residue polypeptide: Hypoxanthine-guanine phosphoribosyltransferase (218 aa).

Ala-2 carries the N-acetylalanine modification. Lys-69 contacts GMP. Position 103 is an N6-acetyllysine (Lys-103). A Glycyl lysine isopeptide (Lys-Gly) (interchain with G-Cter in SUMO1); alternate cross-link involves residue Lys-115. A Glycyl lysine isopeptide (Lys-Gly) (interchain with G-Cter in SUMO2); alternate cross-link involves residue Lys-115. GMP is bound by residues 134–142, Lys-166, 186–188, and Asp-194; these read EDIIDTGKT and KFV. The Proton acceptor role is filled by Asp-138. Thr-142 carries the phosphothreonine modification. Asp-194 contributes to the Mg(2+) binding site.

Belongs to the purine/pyrimidine phosphoribosyltransferase family. As to quaternary structure, homotetramer. Requires Mg(2+) as cofactor.

The protein resides in the cytoplasm. The catalysed reaction is IMP + diphosphate = hypoxanthine + 5-phospho-alpha-D-ribose 1-diphosphate. It catalyses the reaction GMP + diphosphate = guanine + 5-phospho-alpha-D-ribose 1-diphosphate. It participates in purine metabolism; IMP biosynthesis via salvage pathway; IMP from hypoxanthine: step 1/1. Converts guanine to guanosine monophosphate, and hypoxanthine to inosine monophosphate. Transfers the 5-phosphoribosyl group from 5-phosphoribosylpyrophosphate onto the purine. Plays a central role in the generation of purine nucleotides through the purine salvage pathway. This is Hypoxanthine-guanine phosphoribosyltransferase (HPRT1) from Bos taurus (Bovine).